A 662-amino-acid polypeptide reads, in one-letter code: A-kinase anchor protein 10, mitochondrial (662 aa).

Residues 1 to 28 constitute a mitochondrion transit peptide; it reads MRGAGPSPRHSPRALRPDPGPAMSFFRR. Disordered stretches follow at residues 1–55, 178–205, and 242–280; these read MRGA…SPQK, KQSS…ALDR, and GHSA…NSCS. Over residues 32-43 the composition is skewed to basic and acidic residues; the sequence is GKEQEKTLDVKS. Phosphoserine is present on residues Ser52 and Ser189. RGS domains follow at residues 125-369 and 379-505; these read TLEQ…CKYQ and YLAD…YKYL. Residues 256–280 are compositionally biased toward polar residues; the sequence is GSHQIPTDSQDSSSRLAVGSRNSCS. Ser281 bears the Phosphoserine mark. Positions 634–647 are PKA-RII subunit binding; sequence LAWKIAKMIVSDVM.

As to expression, highly expressed in testis, kidney and lung, followed by brain, skeletal muscle, liver, spleen and heart. Also expressed in brown adipose tissue and pancreas.

The protein resides in the mitochondrion. Its subcellular location is the membrane. The protein localises to the cytoplasm. Its function is as follows. Differentially targeted protein that binds to type I and II regulatory subunits of protein kinase A and anchors them to the mitochondria or the plasma membrane. Although the physiological relevance between PKA and AKAPS with mitochondria is not fully understood, one idea is that BAD, a proapoptotic member, is phosphorylated and inactivated by mitochondria-anchored PKA. It cannot be excluded too that it may facilitate PKA as well as G protein signal transduction, by acting as an adapter for assembling multiprotein complexes. With its RGS domain, it could lead to the interaction to G-alpha proteins, providing a link between the signaling machinery and the downstream kinase. In Mus musculus (Mouse), this protein is A-kinase anchor protein 10, mitochondrial (Akap10).